Here is a 423-residue protein sequence, read N- to C-terminus: MSFTTRSTTFSTNYRSLGSVRTPSQRVRPASSAASVYAGAGGSGSRISVSRSVWGGSVGSAGLAGMGGIQTEKETMQDLNDRLASYLDKVKSLETENRRLESKIREHLEKKGPQGVRDWGHYFKIIEDLRAQIFANSVDNARIVLQIDNARLAADDFRVKYETELAMRQSVESDIHGLRKVVDDTNITRLQLETEIEALKEELLFMKKNHEEEVQGLEAQIASSGLTVEVDAPKSQDLSKIMADIRAQYEALAQKNREELDKYWSQQIEESTTVVTTKSAEIRDAETTLTELRRTLQTLEIDLDSMKNQNINLENSLGDVEARYKAQMEQLNGVLLHLESELAQTRAEGQRQAQEYEALLNIKVKLEAEIATYRRLLEDGEDFSLNDALDSSNSMQTVQKTTTRKIVDGRVVSETNDTRVLRH.

At Ser2 the chain carries N-acetylserine. The segment at 2-71 (SFTTRSTTFS…GLAGMGGIQT (70 aa)) is head. Phosphoserine is present on residues Ser7, Ser11, Ser16, and Ser19. Ser31 and Ser32 each carry phosphoserine; alternate. 2 O-linked (GlcNAc) serine; alternate glycosylation sites follow: Ser31 and Ser32. Ser35 carries the post-translational modification Phosphoserine. The residue at position 37 (Tyr37) is a Phosphotyrosine. Ser43 carries the phosphoserine modification. Arg46 is subject to Omega-N-methylarginine. A Phosphoserine; alternate modification is found at Ser50. The O-linked (GlcNAc) serine; alternate glycan is linked to Ser50. Phosphoserine; by MAPKAPK2 and MAPKAPK3 is present on Ser52. Ser57 and Ser60 each carry phosphoserine. The tract at residues 62-366 (GLAGMGGIQT…EALLNIKVKL (305 aa)) is necessary for interaction with PNN. Positions 69-121 (IQTEKETMQDLNDRLASYLDKVKSLETENRRLESKIREHLEKKGPQGVRDWGH) are interaction with TRADD. The tract at residues 72 to 107 (EKETMQDLNDRLASYLDKVKSLETENRRLESKIREH) is coil 1A. The region spanning 72-384 (EKETMQDLND…RLLEDGEDFS (313 aa)) is the IF rod domain. A Glycyl lysine isopeptide (Lys-Gly) (interchain with G-Cter in SUMO2) cross-link involves residue Lys73. Ser85 and Ser92 each carry phosphoserine. A linker 1 region spans residues 108 to 125 (LEKKGPQGVRDWGHYFKI). Lys124 carries the post-translational modification N6-acetyllysine. The coil 1B stretch occupies residues 126–217 (IEDLRAQIFA…KNHEEEVQGL (92 aa)). Ser137 and Ser170 each carry phosphoserine. Residues 218–241 (EAQIASSGLTVEVDAPKSQDLSKI) form a linker 12 region. Residues 236–384 (QDLSKIMADI…RLLEDGEDFS (149 aa)) form an interaction with DNAJB6 region. A Glycyl lysine isopeptide (Lys-Gly) (interchain with G-Cter in SUMO2) cross-link involves residue Lys240. The coil 2 stretch occupies residues 242 to 380 (MADIRAQYEA…ATYRRLLEDG (139 aa)). At Thr295 the chain carries Phosphothreonine. Ser316 bears the Phosphoserine mark. Glycyl lysine isopeptide (Lys-Gly) (interchain with G-Cter in SUMO2) cross-links involve residues Lys363 and Lys365. The segment at 381–423 (EDFSLNDALDSSNSMQTVQKTTTRKIVDGRVVSETNDTRVLRH) is tail. 4 positions are modified to phosphoserine: Ser384, Ser391, Ser392, and Ser394. The residue at position 397 (Thr397) is a Phosphothreonine.

It belongs to the intermediate filament family. In terms of assembly, heterotetramer of two type I and two type II keratins. KRT18 associates with KRT8. Interacts with PLEC isoform 1C, when in a heterodimer with KRT8. Interacts with PNN and mutated CFTR. Interacts with YWHAE, YWHAH and YWHAZ only when phosphorylated. Interacts with the thrombin-antithrombin complex. Interacts with DNAJB6, TCHP and TRADD. Interacts with FAM83H. Interacts with EPPK1. Interacts with PKP1 and PKP2. In terms of processing, phosphorylation increases by IL-6. Post-translationally, proteolytically cleaved by caspases during epithelial cell apoptosis. Cleavage occurs at Asp-231 by either caspase-3, caspas-6 or caspase-7. O-GlcNAcylation increases solubility, and decreases stability by inducing proteasomal degradation. Expressed in endoderm, intestinal epithelial cells and in most extraembryonic tissues.

It is found in the nucleus matrix. It localises to the cytoplasm. The protein localises to the perinuclear region. The protein resides in the nucleus. Its subcellular location is the nucleolus. When phosphorylated, plays a role in filament reorganization. Involved in the delivery of mutated CFTR to the plasma membrane. Involved in the uptake of thrombin-antithrombin complexes by hepatic cells. Together with KRT8, is involved in interleukin-6 (IL-6)-mediated barrier protection. This is Keratin, type I cytoskeletal 18 (Krt18) from Mus musculus (Mouse).